We begin with the raw amino-acid sequence, 185 residues long: Ribosome-recycling factor (185 aa).

The interval Ala-138–Gly-185 is disordered.

This sequence belongs to the RRF family.

Its subcellular location is the cytoplasm. Responsible for the release of ribosomes from messenger RNA at the termination of protein biosynthesis. May increase the efficiency of translation by recycling ribosomes from one round of translation to another. In Lactobacillus delbrueckii subsp. bulgaricus (strain ATCC BAA-365 / Lb-18), this protein is Ribosome-recycling factor.